We begin with the raw amino-acid sequence, 1516 residues long: Neurite extension and migration factor (1516 aa).

The segment covering 380 to 405 has biased composition (basic and acidic residues); sequence LDKKKGKEEGQEDKGVEKKDGKDNGE. 5 disordered regions span residues 380-440, 589-610, 1158-1225, 1373-1419, and 1437-1479; these read LDKK…GSFS, QKKKKQRNTNTDSIKTPFSQKQ, TFND…STKK, TPQE…PGYN, and LGNN…ESGT. 3 stretches are compositionally biased toward polar residues: residues 596–610, 1158–1170, and 1185–1194; these read NTNTDSIKTPFSQKQ, TFNDPSGQISTNN, and GAMNQSSSQK. The segment covering 1443–1453 has biased composition (basic residues); that stretch reads THKKLYRHKSS. Basic and acidic residues predominate over residues 1456–1479; the sequence is ALRDEKCKGKHMEREQVHKDESGT.

Highly expressed in fetal and adult brain, predominantly in the cerebral cortex and the cerebellum. Also expressed in other tissues but to a lesser extent.

It is found in the nucleus. Its subcellular location is the cytoplasm. Functionally, involved in neurite outgrowth by regulating cell-cell adhesion via the N-cadherin signaling pathway. May act by regulating expression of protein-coding genes, such as N-cadherins and integrin beta-1 (ITGB1). This Homo sapiens (Human) protein is Neurite extension and migration factor.